Consider the following 259-residue polypeptide: O-antigen export system permease protein RfbA (259 aa).

6 consecutive transmembrane segments (helical) span residues 33–53 (FGYL…YFIF), 73–95 (FPWQ…NAQI), 111–131 (VMME…FLFV), 142–162 (WGIP…SIIF), 176–196 (VSLG…SDMI), and 228–248 (EYIS…LAIF). The region spanning 33-251 (FGYLWSIANP…IVGLAIFNKL (219 aa)) is the ABC transmembrane type-2 domain.

Belongs to the ABC-2 integral membrane protein family.

The protein resides in the cell inner membrane. May form an ATP-driven O-antigen export apparatus, in association with RfbB. This Klebsiella pneumoniae protein is O-antigen export system permease protein RfbA (rfbA).